A 532-amino-acid polypeptide reads, in one-letter code: Flavin-containing monooxygenase 3 (532 aa).

FAD is bound by residues 9–13, glutamate 32, 40–41, and 61–62; these read GAGVS, LW, and NS. NADP(+) is bound by residues 60 to 61 and 195 to 198; these read TN and SGCD. Serine 401 is subject to Phosphoserine. A helical transmembrane segment spans residues 512-532; that stretch reads CHLVKLFVLPVLFIAVFLALI.

The protein belongs to the FMO family. FAD serves as cofactor.

The protein localises to the microsome membrane. It localises to the endoplasmic reticulum membrane. The enzyme catalyses trimethylamine + NADPH + O2 = trimethylamine N-oxide + NADP(+) + H2O. It carries out the reaction N,N-dimethylaniline + NADPH + O2 + H(+) = N,N-dimethylaniline N-oxide + NADP(+) + H2O. The catalysed reaction is hypotaurine + NADPH + O2 + H(+) = taurine + NADP(+) + H2O. It catalyses the reaction (S)-nicotine + NADPH + O2 = trans-(S)-nicotine N(1')-oxide + NADP(+) + H2O. The enzyme catalyses albendazole + NADPH + O2 + H(+) = albendazole S-oxide + NADP(+) + H2O. Essential hepatic enzyme that catalyzes the oxygenation of a wide variety of nitrogen- and sulfur-containing compounds including drugs as well as dietary compounds. Plays an important role in the metabolism of trimethylamine (TMA), via the production of trimethylamine N-oxide (TMAO) metabolite. TMA is generated by the action of gut microbiota using dietary precursors such as choline, choline containing compounds, betaine or L-carnitine. By regulating TMAO concentration, FMO3 directly impacts both platelet responsiveness and rate of thrombus formation. This chain is Flavin-containing monooxygenase 3 (FMO3), found in Canis lupus familiaris (Dog).